The sequence spans 555 residues: Probable metabolite transport protein YDR387C (555 aa).

Over 1-39 (MSTDESEDVYSDLYSIISQVTSNTANDIEQLPYALTFKT) the chain is Cytoplasmic. A helical transmembrane segment spans residues 40–60 (SLIFVGATIGGLLFGYDTGVI). Topologically, residues 61–83 (SGVLLSLKPEDLSLVVLTDVQKE) are extracellular. Residues 84-104 (LITSSTSVGSFFGSILAFPLA) traverse the membrane as a helical segment. Residues 105 to 118 (DRYGRRITLAICCS) are Cytoplasmic-facing. Residues 119 to 139 (IFILAAIGMAIARTLTFLICG) traverse the membrane as a helical segment. Arg140 is a topological domain (extracellular). A helical membrane pass occupies residues 141–161 (LLVGIAVGVSAQCVPLFLSEI). Residues 162–168 (SPSRIRG) are Cytoplasmic-facing. Residues 169-189 (FMLTLNIIAITGGQLVSYVIA) form a helical membrane-spanning segment. At 190–200 (SLMKEIDNSWR) the chain is on the extracellular side. The helical transmembrane segment at 201–221 (YLFALSAIPAILFLSILDFIP) threads the bilayer. Over 222–356 (ESPRWSISKG…TIRALIVGCM (135 aa)) the chain is Cytoplasmic. A disordered region spans residues 289–313 (SSTSGTLSPPNIKRLSSNTERTSNT). The helical transmembrane segment at 357–377 (LMFFQQITGFNAFMYYAAIIF) threads the bilayer. Residues 378–384 (SKFNIKN) are Extracellular-facing. The chain crosses the membrane as a helical span at residues 385 to 405 (PLLPPILIASTNFIFTFFAMY). Residues 406–413 (TMDSLGRR) lie on the Cytoplasmic side of the membrane. The chain crosses the membrane as a helical span at residues 414-434 (AILLRTILIMTVGLLLCSVGF). Residues 435 to 440 (GHDQVN) are Extracellular-facing. Residues 441 to 461 (LLLISVVIYVAAYASAMGSVP) form a helical membrane-spanning segment. Over 462-474 (WTCVEFLPLNRRS) the chain is Cytoplasmic. Residues 475–497 (FGASCIACTNWLTNAFVSMTYLS) form a helical membrane-spanning segment. The Extracellular portion of the chain corresponds to 498–506 (TINTIGDEN). Residues 507 to 527 (TMLIFAFFTVCAWFFVYFWYP) traverse the membrane as a helical segment. Topologically, residues 528–555 (EVKGLSLEEVGRVFDNGIDVHYVFRTYH) are cytoplasmic.

The protein belongs to the major facilitator superfamily. Sugar transporter (TC 2.A.1.1) family.

The protein resides in the membrane. In Saccharomyces cerevisiae (strain ATCC 204508 / S288c) (Baker's yeast), this protein is Probable metabolite transport protein YDR387C.